The sequence spans 373 residues: Peptide chain release factor 2 (373 aa).

Glutamine 251 is modified (N5-methylglutamine).

Belongs to the prokaryotic/mitochondrial release factor family. Methylated by PrmC. Methylation increases the termination efficiency of RF2.

The protein resides in the cytoplasm. Peptide chain release factor 2 directs the termination of translation in response to the peptide chain termination codons UGA and UAA. The sequence is that of Peptide chain release factor 2 from Salinispora tropica (strain ATCC BAA-916 / DSM 44818 / JCM 13857 / NBRC 105044 / CNB-440).